The following is a 360-amino-acid chain: Peptide chain release factor 1 (360 aa).

At Gln-237 the chain carries N5-methylglutamine.

This sequence belongs to the prokaryotic/mitochondrial release factor family. Methylated by PrmC. Methylation increases the termination efficiency of RF1.

It localises to the cytoplasm. In terms of biological role, peptide chain release factor 1 directs the termination of translation in response to the peptide chain termination codons UAG and UAA. The polypeptide is Peptide chain release factor 1 (Pseudomonas syringae pv. tomato (strain ATCC BAA-871 / DC3000)).